We begin with the raw amino-acid sequence, 248 residues long: 1-(5-phosphoribosyl)-5-[(5-phosphoribosylamino)methylideneamino] imidazole-4-carboxamide isomerase (248 aa).

Asp-11 serves as the catalytic Proton acceptor. Catalysis depends on Asp-132, which acts as the Proton donor.

This sequence belongs to the HisA/HisF family.

It is found in the cytoplasm. The enzyme catalyses 1-(5-phospho-beta-D-ribosyl)-5-[(5-phospho-beta-D-ribosylamino)methylideneamino]imidazole-4-carboxamide = 5-[(5-phospho-1-deoxy-D-ribulos-1-ylimino)methylamino]-1-(5-phospho-beta-D-ribosyl)imidazole-4-carboxamide. The protein operates within amino-acid biosynthesis; L-histidine biosynthesis; L-histidine from 5-phospho-alpha-D-ribose 1-diphosphate: step 4/9. The chain is 1-(5-phosphoribosyl)-5-[(5-phosphoribosylamino)methylideneamino] imidazole-4-carboxamide isomerase from Afipia carboxidovorans (strain ATCC 49405 / DSM 1227 / KCTC 32145 / OM5) (Oligotropha carboxidovorans).